The primary structure comprises 386 residues: Small ribosomal subunit protein mS31 (386 aa).

The protein belongs to the mitochondrion-specific ribosomal protein mS31 family. Component of the mitochondrial ribosome small subunit (28S) which comprises a 12S rRNA and about 30 distinct proteins.

The protein localises to the mitochondrion. This is Small ribosomal subunit protein mS31 (MRPS31) from Bos taurus (Bovine).